A 252-amino-acid chain; its full sequence is tRNA (guanine-N(1)-)-methyltransferase (252 aa).

S-adenosyl-L-methionine contacts are provided by residues G113 and 133–138 (LGDYVL).

It belongs to the RNA methyltransferase TrmD family. Homodimer.

The protein resides in the cytoplasm. It catalyses the reaction guanosine(37) in tRNA + S-adenosyl-L-methionine = N(1)-methylguanosine(37) in tRNA + S-adenosyl-L-homocysteine + H(+). Specifically methylates guanosine-37 in various tRNAs. The chain is tRNA (guanine-N(1)-)-methyltransferase from Stenotrophomonas maltophilia (strain K279a).